A 1074-amino-acid chain; its full sequence is DNA-directed RNA polymerase subunit beta (1074 aa).

Belongs to the RNA polymerase beta chain family. In terms of assembly, in plastids the minimal PEP RNA polymerase catalytic core is composed of four subunits: alpha, beta, beta', and beta''. When a (nuclear-encoded) sigma factor is associated with the core the holoenzyme is formed, which can initiate transcription.

The protein resides in the plastid. Its subcellular location is the chloroplast. The enzyme catalyses RNA(n) + a ribonucleoside 5'-triphosphate = RNA(n+1) + diphosphate. Its function is as follows. DNA-dependent RNA polymerase catalyzes the transcription of DNA into RNA using the four ribonucleoside triphosphates as substrates. In Chara vulgaris (Common stonewort), this protein is DNA-directed RNA polymerase subunit beta.